A 241-amino-acid polypeptide reads, in one-letter code: MSKDTIFSTPIEKLGDFTFDENVAEVFPDMIQRSVPGYSNIITAIGMLAERFVTADSNVYDLGCSRGAATLSARRNIKQANVKIIGVDNSQPMAERARQHIHAYHSEIPVEILCDDIRNIAIENASMVILNFTLQFLPPEDRRALLEKIYRGLNQGGLLVLSEKFRFEDETINNLLIDLHHTFKRANGYSELEVSQKRAALENVMRIDSINTHKVRLKNVGFSHVELWFQCFNFGSMIAIK.

S-adenosyl-L-methionine-binding positions include Tyr-38, 63–65 (GCS), 88–89 (DN), 116–117 (DI), Asn-131, and Arg-198.

The protein belongs to the class I-like SAM-binding methyltransferase superfamily. Cx-SAM synthase family. Homodimer.

It carries out the reaction prephenate + S-adenosyl-L-methionine = carboxy-S-adenosyl-L-methionine + 3-phenylpyruvate + H2O. Catalyzes the conversion of S-adenosyl-L-methionine (SAM) to carboxy-S-adenosyl-L-methionine (Cx-SAM). This is Carboxy-S-adenosyl-L-methionine synthase from Mannheimia succiniciproducens (strain KCTC 0769BP / MBEL55E).